The chain runs to 137 residues: Large ribosomal subunit protein uL16 (137 aa).

This sequence belongs to the universal ribosomal protein uL16 family. Part of the 50S ribosomal subunit.

Functionally, binds 23S rRNA and is also seen to make contacts with the A and possibly P site tRNAs. In Psychrobacter cryohalolentis (strain ATCC BAA-1226 / DSM 17306 / VKM B-2378 / K5), this protein is Large ribosomal subunit protein uL16.